We begin with the raw amino-acid sequence, 85 residues long: Large ribosomal subunit protein bL27 (85 aa).

The disordered stretch occupies residues 1–21 (MAHKKAAGSSRNGRDSESKRL).

This sequence belongs to the bacterial ribosomal protein bL27 family.

The chain is Large ribosomal subunit protein bL27 from Chromohalobacter salexigens (strain ATCC BAA-138 / DSM 3043 / CIP 106854 / NCIMB 13768 / 1H11).